Reading from the N-terminus, the 223-residue chain is Ribonuclease T (223 aa).

The region spanning 20-194 (VVIDVETAGF…YDTERTAELF (175 aa)) is the Exonuclease domain. Mg(2+) contacts are provided by Asp23, Glu25, His181, and Asp186. His181 (proton donor/acceptor) is an active-site residue.

The protein belongs to the RNase T family. As to quaternary structure, homodimer. Mg(2+) is required as a cofactor.

In terms of biological role, trims short 3' overhangs of a variety of RNA species, leaving a one or two nucleotide 3' overhang. Responsible for the end-turnover of tRNA: specifically removes the terminal AMP residue from uncharged tRNA (tRNA-C-C-A). Also appears to be involved in tRNA biosynthesis. The chain is Ribonuclease T from Shewanella sp. (strain W3-18-1).